The chain runs to 119 residues: Circadian clock oscillator protein KaiB (119 aa).

This sequence belongs to the KaiB family. In terms of assembly, may undergo a major conformational rearrangment; in the free state forms homooligomers. When bound to KaiC switches to a monomeric thioredoxin-fold (KaiB(fs)). The active oscillator complex is probably KaiC(6):KaiB(6).

Its function is as follows. Component of the KaiBC clock protein complex, which constitutes the main circadian regulator in cyanobacteria; it may modify the ATPase activity of KaiC. Functionally, may be a metamorphic protein which reversibly switches between an inactive tetrameric fold and a rare, thioredoxin-like monomeric fold (KaiB(fs)). KaiB(fs) binds phospho-KaiC, and perhaps clock output effectors. The protein is Circadian clock oscillator protein KaiB of Prochlorococcus marinus (strain MIT 9303).